The primary structure comprises 325 residues: Diacylglycerol acyltransferase/mycolyltransferase Ag85B (325 aa).

An N-terminal signal peptide occupies residues 1-40 (MTDVSRKIRAWGRRLMIGTAAAVVLPGLVGLAGGAATAGA). Residue 82–83 (LR) participates in substrate binding. The fibronectin-binding stretch occupies residues 98-108 (FEWYYQSGLSI). C127 and C132 are disulfide-bonded. S166 and D194 together coordinate substrate. S166 serves as the catalytic Nucleophile. E270 is an active-site residue. Substrate contacts are provided by residues 272–275 (FVRS), K279, and 302–304 (HSW). H302 is an active-site residue.

Belongs to the mycobacterial A85 antigen family.

The protein localises to the secreted. The enzyme catalyses 2 alpha,alpha'-trehalose 6-mycolate = alpha,alpha'-trehalose 6,6'-bismycolate + alpha,alpha-trehalose. It carries out the reaction an acyl-CoA + a 1,2-diacyl-sn-glycerol = a triacyl-sn-glycerol + CoA. In terms of biological role, the antigen 85 proteins (FbpA, FbpB, FbpC) are responsible for the high affinity of mycobacteria for fibronectin, a large adhesive glycoprotein, which facilitates the attachment of Mycobacteria to murine alveolar macrophages (AMs). They also help to maintain the integrity of the cell wall by catalyzing the transfer of mycolic acids to cell wall arabinogalactan and through the synthesis of alpha,alpha-trehalose dimycolate (TDM, cord factor). They catalyze the transfer of a mycoloyl residue from one molecule of alpha,alpha-trehalose monomycolate (TMM) to another TMM, leading to the formation of TDM. The protein is Diacylglycerol acyltransferase/mycolyltransferase Ag85B (fbpB) of Mycobacterium bovis (strain BCG / Pasteur 1173P2).